The chain runs to 270 residues: ATP synthase subunit a (270 aa).

6 helical membrane passes run 27–47, 90–110, 147–166, 182–202, 211–231, and 238–258; these read FWTFHVDTLAWSVVLGLVFIL, IAPLALTIFVWVLLMNLMDLI, VNMTFALSLGVFALMIFYSV, PFNTPWLYWFNFILELVSLIA, LFGNLYAGELIFILIAGTLGV, and FLWAAFHLLVIPLQAFIFMML.

It belongs to the ATPase A chain family. In terms of assembly, F-type ATPases have 2 components, CF(1) - the catalytic core - and CF(0) - the membrane proton channel. CF(1) has five subunits: alpha(3), beta(3), gamma(1), delta(1), epsilon(1). CF(0) has three main subunits: a(1), b(2) and c(9-12). The alpha and beta chains form an alternating ring which encloses part of the gamma chain. CF(1) is attached to CF(0) by a central stalk formed by the gamma and epsilon chains, while a peripheral stalk is formed by the delta and b chains.

Its subcellular location is the cell inner membrane. In terms of biological role, key component of the proton channel; it plays a direct role in the translocation of protons across the membrane. This Pseudoalteromonas atlantica (strain T6c / ATCC BAA-1087) protein is ATP synthase subunit a.